Consider the following 757-residue polypeptide: uncharacterized protein (757 aa).

An S1 motif domain is found at 640–709 (GMILEGVVSN…ARKRIALTMR (70 aa)). A compositionally biased stretch (basic and acidic residues) spans 711–741 (DDEPGGAKHKMPSENRSRERTAGRKPQRNDR). Residues 711 to 757 (DDEPGGAKHKMPSENRSRERTAGRKPQRNDRAPANSAMADAFAKLKR) form a disordered region.

This is an uncharacterized protein from Neisseria meningitidis serogroup B (strain ATCC BAA-335 / MC58).